The chain runs to 235 residues: Phosphoribosylaminoimidazole-succinocarboxamide synthase (235 aa).

Belongs to the SAICAR synthetase family.

The catalysed reaction is 5-amino-1-(5-phospho-D-ribosyl)imidazole-4-carboxylate + L-aspartate + ATP = (2S)-2-[5-amino-1-(5-phospho-beta-D-ribosyl)imidazole-4-carboxamido]succinate + ADP + phosphate + 2 H(+). Its pathway is purine metabolism; IMP biosynthesis via de novo pathway; 5-amino-1-(5-phospho-D-ribosyl)imidazole-4-carboxamide from 5-amino-1-(5-phospho-D-ribosyl)imidazole-4-carboxylate: step 1/2. In Nautilia profundicola (strain ATCC BAA-1463 / DSM 18972 / AmH), this protein is Phosphoribosylaminoimidazole-succinocarboxamide synthase.